Here is a 1405-residue protein sequence, read N- to C-terminus: DNA-directed RNA polymerase subunit beta' (1405 aa).

Zn(2+) is bound by residues Cys70, Cys72, Cys85, and Cys88. Mg(2+) contacts are provided by Asp460, Asp462, and Asp464. Zn(2+) contacts are provided by Cys814, Cys888, Cys895, and Cys898.

Belongs to the RNA polymerase beta' chain family. The RNAP catalytic core consists of 2 alpha, 1 beta, 1 beta' and 1 omega subunit. When a sigma factor is associated with the core the holoenzyme is formed, which can initiate transcription. It depends on Mg(2+) as a cofactor. Zn(2+) is required as a cofactor.

The enzyme catalyses RNA(n) + a ribonucleoside 5'-triphosphate = RNA(n+1) + diphosphate. DNA-dependent RNA polymerase catalyzes the transcription of DNA into RNA using the four ribonucleoside triphosphates as substrates. The polypeptide is DNA-directed RNA polymerase subunit beta' (Shewanella woodyi (strain ATCC 51908 / MS32)).